The following is a 211-amino-acid chain: Thymidylate kinase (211 aa).

11–18 (GPDGAGKT) contributes to the ATP binding site.

The protein belongs to the thymidylate kinase family.

The catalysed reaction is dTMP + ATP = dTDP + ADP. In terms of biological role, phosphorylation of dTMP to form dTDP in both de novo and salvage pathways of dTTP synthesis. The polypeptide is Thymidylate kinase (Streptococcus pyogenes serotype M49 (strain NZ131)).